A 209-amino-acid chain; its full sequence is MAAAIAASALPGAFGRLVSVCSRSILASQGSGSASLWSASRRFNSQSASYPQGYVPKTSLSSPPWQEVVLPDPVEETRHHAEVVKRVNELIATGQYGRLFAVVHFASHQWKVTAEDLILIENELDIKCGERIRLEKVLLVGADNFTLLGKPLLRKELVRVEATVIEKTESWPKINMKFRKRKNFRKKKIIVNPQTILRINTIEIAPRLL.

Residues 1 to 43 (MAAAIAASALPGAFGRLVSVCSRSILASQGSGSASLWSASRRF) constitute a mitochondrion transit peptide.

Belongs to the bacterial ribosomal protein bL21 family. In terms of assembly, component of the mitochondrial ribosome large subunit (39S) which comprises a 16S rRNA and about 50 distinct proteins.

It localises to the mitochondrion. This is Large ribosomal subunit protein bL21m (Mrpl21) from Mus musculus (Mouse).